We begin with the raw amino-acid sequence, 511 residues long: Cobyric acid synthase (511 aa).

Positions 251-443 constitute a GATase cobBQ-type domain; that stretch reads LLDIAIICLP…IHGIFDNDVF (193 aa). The active-site Nucleophile is cysteine 332. Histidine 435 is a catalytic residue.

The protein belongs to the CobB/CobQ family. CobQ subfamily.

It functions in the pathway cofactor biosynthesis; adenosylcobalamin biosynthesis. Catalyzes amidations at positions B, D, E, and G on adenosylcobyrinic A,C-diamide. NH(2) groups are provided by glutamine, and one molecule of ATP is hydrogenolyzed for each amidation. This is Cobyric acid synthase from Listeria monocytogenes serovar 1/2a (strain ATCC BAA-679 / EGD-e).